The chain runs to 416 residues: Serine hydroxymethyltransferase (416 aa).

(6S)-5,6,7,8-tetrahydrofolate-binding positions include Leu121 and 125–127 (GHL). N6-(pyridoxal phosphate)lysine is present on Lys230. 355–357 (SPF) contributes to the (6S)-5,6,7,8-tetrahydrofolate binding site.

This sequence belongs to the SHMT family. In terms of assembly, homodimer. Pyridoxal 5'-phosphate serves as cofactor.

It is found in the cytoplasm. It catalyses the reaction (6R)-5,10-methylene-5,6,7,8-tetrahydrofolate + glycine + H2O = (6S)-5,6,7,8-tetrahydrofolate + L-serine. It participates in one-carbon metabolism; tetrahydrofolate interconversion. The protein operates within amino-acid biosynthesis; glycine biosynthesis; glycine from L-serine: step 1/1. Functionally, catalyzes the reversible interconversion of serine and glycine with tetrahydrofolate (THF) serving as the one-carbon carrier. This reaction serves as the major source of one-carbon groups required for the biosynthesis of purines, thymidylate, methionine, and other important biomolecules. Also exhibits THF-independent aldolase activity toward beta-hydroxyamino acids, producing glycine and aldehydes, via a retro-aldol mechanism. This chain is Serine hydroxymethyltransferase, found in Streptococcus thermophilus (strain CNRZ 1066).